A 508-amino-acid chain; its full sequence is Photosystem II CP47 reaction center protein (508 aa).

Helical transmembrane passes span S21 to S36, I101 to W115, G140 to F156, I203 to S218, V237 to V252, and S457 to R472.

The protein belongs to the PsbB/PsbC family. PsbB subfamily. In terms of assembly, PSII is composed of 1 copy each of membrane proteins PsbA, PsbB, PsbC, PsbD, PsbE, PsbF, PsbH, PsbI, PsbJ, PsbK, PsbL, PsbM, PsbT, PsbX, PsbY, PsbZ, Psb30/Ycf12, at least 3 peripheral proteins of the oxygen-evolving complex and a large number of cofactors. It forms dimeric complexes. The cofactor is Binds multiple chlorophylls. PSII binds additional chlorophylls, carotenoids and specific lipids..

It is found in the plastid. The protein resides in the chloroplast thylakoid membrane. In terms of biological role, one of the components of the core complex of photosystem II (PSII). It binds chlorophyll and helps catalyze the primary light-induced photochemical processes of PSII. PSII is a light-driven water:plastoquinone oxidoreductase, using light energy to abstract electrons from H(2)O, generating O(2) and a proton gradient subsequently used for ATP formation. The chain is Photosystem II CP47 reaction center protein from Dioscorea elephantipes (Elephant's foot yam).